A 352-amino-acid polypeptide reads, in one-letter code: uncharacterized protein (352 aa).

Positions 285–352 (FQHLRNARER…IKSEIRRLQR (68 aa)) form a coiled coil.

This is an uncharacterized protein from Emericella nidulans (strain FGSC A4 / ATCC 38163 / CBS 112.46 / NRRL 194 / M139) (Aspergillus nidulans).